We begin with the raw amino-acid sequence, 374 residues long: 4-hydroxy-3-methylbut-2-en-1-yl diphosphate synthase (flavodoxin) (374 aa).

Residues Cys-270, Cys-273, Cys-305, and Glu-312 each contribute to the [4Fe-4S] cluster site.

Belongs to the IspG family. [4Fe-4S] cluster is required as a cofactor.

It carries out the reaction (2E)-4-hydroxy-3-methylbut-2-enyl diphosphate + oxidized [flavodoxin] + H2O + 2 H(+) = 2-C-methyl-D-erythritol 2,4-cyclic diphosphate + reduced [flavodoxin]. Its pathway is isoprenoid biosynthesis; isopentenyl diphosphate biosynthesis via DXP pathway; isopentenyl diphosphate from 1-deoxy-D-xylulose 5-phosphate: step 5/6. Functionally, converts 2C-methyl-D-erythritol 2,4-cyclodiphosphate (ME-2,4cPP) into 1-hydroxy-2-methyl-2-(E)-butenyl 4-diphosphate. This is 4-hydroxy-3-methylbut-2-en-1-yl diphosphate synthase (flavodoxin) from Yersinia enterocolitica serotype O:8 / biotype 1B (strain NCTC 13174 / 8081).